Reading from the N-terminus, the 260-residue chain is tRNA pseudouridine synthase A (260 aa).

The active-site Nucleophile is Asp-60. Tyr-118 serves as a coordination point for substrate.

It belongs to the tRNA pseudouridine synthase TruA family. Homodimer.

It carries out the reaction uridine(38/39/40) in tRNA = pseudouridine(38/39/40) in tRNA. Formation of pseudouridine at positions 38, 39 and 40 in the anticodon stem and loop of transfer RNAs. This is tRNA pseudouridine synthase A from Leuconostoc citreum (strain KM20).